A 403-amino-acid polypeptide reads, in one-letter code: Heparan-sulfate 6-O-sulfotransferase 2 (403 aa).

At 1-7 (MEDRSHK) the chain is on the cytoplasmic side. Residues 8 to 28 (VLLALVMLFLFAVIVLQYVCP) form a helical; Signal-anchor for type II membrane protein membrane-spanning segment. The Lumenal portion of the chain corresponds to 29–403 (GTECQLLRLR…DYLGNVERWR (375 aa)). An N-linked (GlcNAc...) asparagine glycan is attached at N64. 88 to 96 (HIQKTGGTT) provides a ligand contact to 3'-phosphoadenylyl sulfate. Substrate contacts are provided by residues 118 to 119 (KK), R135, W140, and H145. The active-site Proton acceptor is the H145. 3'-phosphoadenylyl sulfate-binding residues include R180 and S188. The substrate site is built by H192 and W199. N-linked (GlcNAc...) asparagine glycosylation occurs at N259. 312–314 (TQY) provides a ligand contact to 3'-phosphoadenylyl sulfate. A glycan (N-linked (GlcNAc...) asparagine) is linked at N315. 318–319 (RA) provides a ligand contact to 3'-phosphoadenylyl sulfate. The segment at 381-403 (AHLREQGENSSSTDYLGNVERWR) is disordered. N389 carries an N-linked (GlcNAc...) asparagine glycan.

This sequence belongs to the sulfotransferase 6 family.

It is found in the membrane. The enzyme catalyses alpha-D-glucosaminyl-[heparan sulfate](n) + 3'-phosphoadenylyl sulfate = 6-sulfo-alpha-D-glucosaminyl-[heparan sulfate](n) + adenosine 3',5'-bisphosphate + H(+). Its function is as follows. 6-O-sulfation enzyme which catalyzes the transfer of sulfate from 3'-phosphoadenosine 5'-phosphosulfate (PAPS) to position 6 of the N-sulfoglucosamine residue (GlcNS) of heparan sulfate. May also play a role in limb development. This Gallus gallus (Chicken) protein is Heparan-sulfate 6-O-sulfotransferase 2 (HS6ST2).